The following is a 489-amino-acid chain: Probable anthranilate synthase component 1 (489 aa).

L-tryptophan contacts are provided by residues Ser-54 and 262-264 (PYM). 297-298 (GT) contributes to the chorismate binding site. Position 324 (Glu-324) interacts with Mg(2+). Residues Ser-390 and Ser-392 each carry the phosphoserine modification. Residues Tyr-412, Arg-433, 447-449 (GGG), and Gly-449 each bind chorismate. Glu-462 contacts Mg(2+). At Ser-488 the chain carries Phosphoserine.

Belongs to the anthranilate synthase component I family. Tetramer of two components I and two components II. Mg(2+) serves as cofactor.

It catalyses the reaction chorismate + L-glutamine = anthranilate + pyruvate + L-glutamate + H(+). It participates in amino-acid biosynthesis; L-tryptophan biosynthesis; L-tryptophan from chorismate: step 1/5. The protein is Probable anthranilate synthase component 1 (trp3) of Schizosaccharomyces pombe (strain 972 / ATCC 24843) (Fission yeast).